The chain runs to 118 residues: Large ribosomal subunit protein bL20 (118 aa).

The protein belongs to the bacterial ribosomal protein bL20 family.

In terms of biological role, binds directly to 23S ribosomal RNA and is necessary for the in vitro assembly process of the 50S ribosomal subunit. It is not involved in the protein synthesizing functions of that subunit. The sequence is that of Large ribosomal subunit protein bL20 from Stutzerimonas stutzeri (strain A1501) (Pseudomonas stutzeri).